Reading from the N-terminus, the 305-residue chain is Myb-like transcriptional regulator basR (305 aa).

Myb-like domains are found at residues 5–59 (RRRW…YNRF), 60–110 (TGGL…HHCL), and 111–162 (NPEL…TILS). A disordered region spans residues 175–215 (PCCDSPSPSKSSRRPPSTPTSTPQVPGSRQGSSYDPYDYGS). Residues 198-207 (QVPGSRQGSS) show a composition bias toward polar residues.

It localises to the nucleus. Its function is as follows. Transcription regulator that acts as a central regulatory node for the integration of external bacterial signals leading to the regulation of secondary metabolite gene clusters such as orsellinic, lecanoric acid, cichorine, 2,4-dihydroxy-3-methyl-6-(2-oxopropyl)benzaldehyde (dba), emericellamide or microperfuranone clusters. In Emericella nidulans (strain FGSC A4 / ATCC 38163 / CBS 112.46 / NRRL 194 / M139) (Aspergillus nidulans), this protein is Myb-like transcriptional regulator basR.